The following is a 229-amino-acid chain: Zinc finger matrin-type protein 4 (229 aa).

Matrin-type zinc fingers lie at residues serine 14–leucine 44 and aspartate 72–leucine 106. The tract at residues threonine 116–alanine 135 is disordered. 2 consecutive Matrin-type zinc fingers follow at residues arginine 145 to arginine 175 and tyrosine 198 to asparagine 228.

It localises to the nucleus. In Homo sapiens (Human), this protein is Zinc finger matrin-type protein 4 (ZMAT4).